Here is a 424-residue protein sequence, read N- to C-terminus: Probable carboxypeptidase AN5749 (424 aa).

The N-terminal stretch at 1–17 (MNLSILAALALVSFSTA) is a signal peptide. A glycan (N-linked (GlcNAc...) asparagine) is linked at asparagine 58. Zn(2+) is bound at residue aspartate 139. Catalysis depends on glutamate 171, which acts as the Proton acceptor. Zn(2+) is bound at residue glutamate 172. 2 N-linked (GlcNAc...) asparagine glycosylation sites follow: asparagine 184 and asparagine 323.

It belongs to the peptidase M20A family. The cofactor is Zn(2+).

It localises to the secreted. The polypeptide is Probable carboxypeptidase AN5749 (Emericella nidulans (strain FGSC A4 / ATCC 38163 / CBS 112.46 / NRRL 194 / M139) (Aspergillus nidulans)).